We begin with the raw amino-acid sequence, 480 residues long: Probable cytosol aminopeptidase (480 aa).

Mn(2+) contacts are provided by Lys248 and Asp253. Residue Lys260 is part of the active site. Asp271, Asp330, and Glu332 together coordinate Mn(2+). Arg334 is a catalytic residue.

This sequence belongs to the peptidase M17 family. It depends on Mn(2+) as a cofactor.

Its subcellular location is the cytoplasm. The catalysed reaction is Release of an N-terminal amino acid, Xaa-|-Yaa-, in which Xaa is preferably Leu, but may be other amino acids including Pro although not Arg or Lys, and Yaa may be Pro. Amino acid amides and methyl esters are also readily hydrolyzed, but rates on arylamides are exceedingly low.. It carries out the reaction Release of an N-terminal amino acid, preferentially leucine, but not glutamic or aspartic acids.. Its function is as follows. Presumably involved in the processing and regular turnover of intracellular proteins. Catalyzes the removal of unsubstituted N-terminal amino acids from various peptides. The sequence is that of Probable cytosol aminopeptidase from Solibacter usitatus (strain Ellin6076).